The following is a 738-amino-acid chain: MVAEEDIEKQVLQLIDSFFLKTTLLICSTESSRYQSSTENIFLFDDTWFEDHSELVSELPEIISKWSHYDGRKELPPLVVETYLDLRQLNSSHLVRLKDHEGHLWNVCKGTKKQEIVMERWLIELDNSSPTFKSYSEDETDVNELSKQLVLLFRYLLTLIQLLPTTELYQLLIKSYNGPQNEGSSNPITSTGPLVSIRTCVLDGSKPILSKGRIGLSKPIINTYSNALNESNLPAHLDQKKITPVWTKFGLLRVSVSYRRDWKFEINNTNDELFSARHASVSHNSQGPQNQPEQEGQSDQDIGKRQPQFQQQQQPQQQQQQQQQQQRQHQVQTQQQRQIPDRRSLSLSPCTRANSFEPQSWQKKVYPISRPVQPFKVGSIGSQSASRNPSNSSFFNQPPVHRPSMSSNYGPQMNIEGTSVGSTSKYSSSFGNIRRHSSVKTTENAEKVSKAVKSPLQPQESQEDLMDFVKLLEEKPDLTIKKTSGNNPPNINISDSLIRYQNLKPSNDLLSEDLSVSLSMDPNHTYHRGRSDSHSPLPSISPSMHYGSLNSRMSQGANASHLIARGGGNSSTSAFNSRRNSLDKSSNKQGMSGLPPIFGGESTSYHHDNKIQKYNQLGVEEDDDDEDDRLLNQMGNSATKFKSSISPRSIDSISSSFIKSRIPIRQPYHYSQPTTAPFQAQAKFHKPANKLIDNGNRSNSNNNNHNGNDAVGVMHNDEDDQDDDLVFFMSDMNLSKEG.

Disordered regions lie at residues 279–359 (ASVS…FEPQ) and 377–462 (VGSI…QESQ). 2 stretches are compositionally biased toward low complexity: residues 284 to 297 (NSQG…QEGQ) and 306 to 338 (QPQF…QQRQ). The residue at position 344 (serine 344) is a Phosphoserine; by PKA. Residues 345-359 (LSLSPCTRANSFEPQ) show a composition bias toward polar residues. Serine 348 is subject to Phosphoserine; by TORC1. Phosphoserine is present on serine 355. Low complexity-rich tracts occupy residues 382–399 (SQSA…NQPP) and 417–429 (GTSV…YSSS). The interval 432 to 520 (NIRRHSSVKT…SEDLSVSLSM (89 aa)) is interaction with ATG1. Serine 437 carries the post-translational modification Phosphoserine; by TORC1 and PKA. Serine 438 bears the Phosphoserine; by TORC1 mark. Residues serine 461 and serine 496 each carry the phosphoserine modification. The tract at residues 521 to 605 (DPNHTYHRGR…PIFGGESTSY (85 aa)) is disordered. Composition is skewed to polar residues over residues 534-558 (HSPL…QGAN) and 570-579 (SSTSAFNSRR). Residues serine 535 and serine 541 each carry the phosphoserine; by TORC1 modification. The residue at position 554 (serine 554) is a Phosphoserine. Serine 581 is subject to Phosphoserine; by PKA. Phosphoserine; by TORC1 is present on residues serine 646 and serine 649. A disordered region spans residues 690 to 719 (KLIDNGNRSNSNNNNHNGNDAVGVMHNDED). Residues 694-708 (NGNRSNSNNNNHNGN) show a composition bias toward low complexity.

Belongs to the ATG13 family. Fungi subfamily. In terms of assembly, hypophosphorylated form interacts with ATG1 to form the ATG1-ATG13 kinase complex. The ATG1-ATG13 complex interacts with the ATG17-ATG29-ATG31 complex through direct interaction with ATG17. Interacts with VAC8. Phosphorylated; hyperphosphorylated by the TORC1 kinase complex to repress the induction of autophagy. Starvation and TOR inactivation results in ATG13 partial dephosphorylation leading to ATG1-binding. Rephosphorylated by ATG1 during prolonged nitrogen starvation. Also phosphorylated by TPK1; TPK1 phosphorylation regulates the association of ATG13 with the PAS. Within this regulatory network, mitochondrial respiratory deficiency suppresses autophagic flux. Hyperphosphorylation in rich medium is impaired in the absence of VAC8.

The protein localises to the cytoplasm. Its subcellular location is the preautophagosomal structure. In terms of biological role, activates the ATG1 kinase in a nutritional condition dependent manner through the TOR pathway, leading to autophagy. Required for autophosphorylation of ATG1 at 'Thr-226' and its dimerization. May also be involved in the regulation of autophagy through SNF1. Involved in ATG9 and ATG23 cycling through the pre-autophagosomal structure. Also involved in cytoplasm to vacuole transport (Cvt) and more specifically in Cvt vesicle formation. Seems to play a role in the switching machinery regulating the conversion between the Cvt pathway and autophagy. Finally, ATG13 is also required for glycogen storage during stationary phase. In Saccharomyces cerevisiae (strain YJM789) (Baker's yeast), this protein is Autophagy-related protein 13 (ATG13).